We begin with the raw amino-acid sequence, 409 residues long: Tetracenomycin polyketide synthase ketoacyl synthase beta subunit (409 aa).

One can recognise a Ketosynthase family 3 (KS3) domain in the interval 4–407 (PAPVVVTGLG…GFNSALVVRR (404 aa)).

This sequence belongs to the thiolase-like superfamily. Beta-ketoacyl-ACP synthases family. In terms of assembly, the tetracenomycin polyketide synthase (TCM PKS) is composed of a ketosynthase complex (TcmKL), an acyl carrier protein (TcmM), a cyclase (TcmN) and a probable second cyclase (TcmJ). TcmK and TcmL form a heterodimeric complex.

The catalysed reaction is 10 malonyl-CoA + 8 H(+) = tetracenomycin F2 + 10 CO2 + 10 CoA + 2 H2O. It functions in the pathway antibiotic biosynthesis; tetracenomycin C biosynthesis. Functionally, involved in the biosynthesis of tetracenomycin C (TCM C). Part of a type II polyketide synthase (PKS) that catalyzes the synthesis of tetracenomycin F2 (TCM F2), a precursor of TCM C, from malonyl-CoA. TcmK and TcmL form a heterodimeric alpha-beta complex that catalyzes the condensation reactions between the growing acyl-enzyme chain and the malonyl-CoA extender units. The chain is Tetracenomycin polyketide synthase ketoacyl synthase beta subunit from Streptomyces glaucescens.